Reading from the N-terminus, the 330-residue chain is Lipoyl synthase (330 aa).

The disordered stretch occupies residues 1-31; that stretch reads MSDAPIATSSEVTQSPADYDPTKKQKSAEKT. Polar residues predominate over residues 7 to 16; it reads ATSSEVTQSP. Residues 20–31 are compositionally biased toward basic and acidic residues; the sequence is DPTKKQKSAEKT. [4Fe-4S] cluster is bound by residues cysteine 77, cysteine 82, cysteine 88, cysteine 103, cysteine 107, cysteine 110, and serine 317. One can recognise a Radical SAM core domain in the interval 88 to 306; that stretch reads CFGKGTATFM…EEEAYKMGFT (219 aa).

It belongs to the radical SAM superfamily. Lipoyl synthase family. [4Fe-4S] cluster serves as cofactor.

It is found in the cytoplasm. It carries out the reaction [[Fe-S] cluster scaffold protein carrying a second [4Fe-4S](2+) cluster] + N(6)-octanoyl-L-lysyl-[protein] + 2 oxidized [2Fe-2S]-[ferredoxin] + 2 S-adenosyl-L-methionine + 4 H(+) = [[Fe-S] cluster scaffold protein] + N(6)-[(R)-dihydrolipoyl]-L-lysyl-[protein] + 4 Fe(3+) + 2 hydrogen sulfide + 2 5'-deoxyadenosine + 2 L-methionine + 2 reduced [2Fe-2S]-[ferredoxin]. It participates in protein modification; protein lipoylation via endogenous pathway; protein N(6)-(lipoyl)lysine from octanoyl-[acyl-carrier-protein]: step 2/2. Catalyzes the radical-mediated insertion of two sulfur atoms into the C-6 and C-8 positions of the octanoyl moiety bound to the lipoyl domains of lipoate-dependent enzymes, thereby converting the octanoylated domains into lipoylated derivatives. The protein is Lipoyl synthase of Cupriavidus metallidurans (strain ATCC 43123 / DSM 2839 / NBRC 102507 / CH34) (Ralstonia metallidurans).